Reading from the N-terminus, the 274-residue chain is Triosephosphate isomerase (274 aa).

31–33 (NWK) is a binding site for substrate. His118 (electrophile) is an active-site residue. Glu188 (proton acceptor) is an active-site residue. Substrate is bound by residues Gly194, Ser234, and 255–256 (GG).

The protein belongs to the triosephosphate isomerase family. As to quaternary structure, homodimer.

Its subcellular location is the cytoplasm. The catalysed reaction is D-glyceraldehyde 3-phosphate = dihydroxyacetone phosphate. It functions in the pathway carbohydrate biosynthesis; gluconeogenesis. It participates in carbohydrate degradation; glycolysis; D-glyceraldehyde 3-phosphate from glycerone phosphate: step 1/1. Involved in the gluconeogenesis. Catalyzes stereospecifically the conversion of dihydroxyacetone phosphate (DHAP) to D-glyceraldehyde-3-phosphate (G3P). In Chlamydia trachomatis serovar D (strain ATCC VR-885 / DSM 19411 / UW-3/Cx), this protein is Triosephosphate isomerase.